The primary structure comprises 458 residues: tRNA modification GTPase MnmE (458 aa).

Positions 26, 88, and 127 each coordinate (6S)-5-formyl-5,6,7,8-tetrahydrofolate. Residues 224-378 form the TrmE-type G domain; the sequence is GLSTAIIGRP…IEERINDIFF (155 aa). Asn234 lines the K(+) pocket. Residues 234 to 239, 253 to 259, and 278 to 281 each bind GTP; these read NVGKSS, TDIEGTT, and DTAG. Ser238 lines the Mg(2+) pocket. Positions 253, 255, and 258 each coordinate K(+). Thr259 contacts Mg(2+). Lys458 is a (6S)-5-formyl-5,6,7,8-tetrahydrofolate binding site.

This sequence belongs to the TRAFAC class TrmE-Era-EngA-EngB-Septin-like GTPase superfamily. TrmE GTPase family. Homodimer. Heterotetramer of two MnmE and two MnmG subunits. K(+) is required as a cofactor.

It is found in the cytoplasm. Its function is as follows. Exhibits a very high intrinsic GTPase hydrolysis rate. Involved in the addition of a carboxymethylaminomethyl (cmnm) group at the wobble position (U34) of certain tRNAs, forming tRNA-cmnm(5)s(2)U34. In Streptococcus agalactiae serotype III (strain NEM316), this protein is tRNA modification GTPase MnmE.